A 624-amino-acid polypeptide reads, in one-letter code: Histone-lysine N-methyltransferase, H3 lysine-9 specific SUVH4 (624 aa).

Disordered stretches follow at residues 1 to 25 and 54 to 86; these read MAGK…VQKV and DDTE…KGKQ. Residues 149-302 enclose the YDG domain; that stretch reads GDLPGIDVGH…FTVYKYRLKR (154 aa). A Pre-SET domain is found at 381 to 443; the sequence is TGCNCRGSCT…KCVNRTSQKR (63 aa). Zn(2+) is bound by residues cysteine 383, cysteine 385, cysteine 389, cysteine 395, cysteine 397, cysteine 425, cysteine 429, cysteine 431, and cysteine 435. Positions 446-594 constitute an SET domain; it reads FNLEVFRSAK…PMQELTYDYG (149 aa). S-adenosyl-L-methionine contacts are provided by residues 456–458, tyrosine 493, arginine 548, and 551–552; these read KGW and NH. The Zn(2+) site is built by cysteine 554, cysteine 612, cysteine 614, and cysteine 619. The Post-SET domain maps to 608-624; the sequence is KQLACYCGALNCRKRLY.

This sequence belongs to the class V-like SAM-binding methyltransferase superfamily. Histone-lysine methyltransferase family. Suvar3-9 subfamily. As to quaternary structure, interacts with H3 histone. Expressed in leaves stems and flowers.

The protein resides in the nucleus. The protein localises to the chromosome. Its subcellular location is the centromere. It catalyses the reaction N(6)-methyl-L-lysyl(9)-[histone H3] + S-adenosyl-L-methionine = N(6),N(6)-dimethyl-L-lysyl(9)-[histone H3] + S-adenosyl-L-homocysteine + H(+). The enzyme catalyses L-lysyl(9)-[histone H3] + S-adenosyl-L-methionine = N(6)-methyl-L-lysyl(9)-[histone H3] + S-adenosyl-L-homocysteine + H(+). Histone methyltransferase. Methylates 'Lys-9' of histone H3. H3 'Lys-9' methylation represents a specific tag for epigenetic transcriptional repression. The silencing mechanism via DNA CpNpG methylation requires the targeting of chromomethylase CMT3 to methylated histones, probably through an interaction with an HP1-like adapter. By its function, KYP is directly required for the maintenance of the DNA CpNpG and asymmetric methylation. Involved in the silencing of transposable elements. The protein is Histone-lysine N-methyltransferase, H3 lysine-9 specific SUVH4 (SUVH4) of Arabidopsis thaliana (Mouse-ear cress).